Here is a 276-residue protein sequence, read N- to C-terminus: Small ribosomal subunit protein uS2 (276 aa).

Disordered regions lie at residues 209 to 233 (AQEA…AADV) and 252 to 276 (VDWS…SSWE). Low complexity predominate over residues 211-231 (EAAAAAQAAKETAEPTTEGAA).

This sequence belongs to the universal ribosomal protein uS2 family. In terms of assembly, component of the small ribosomal subunit. Mature ribosomes consist of a small (40S) and a large (60S) subunit. The 40S subunit contains about 33 different proteins and 1 molecule of RNA (18S). The 60S subunit contains about 49 different proteins and 3 molecules of RNA (25S, 5.8S and 5S). Interacts with RPS21.

The protein resides in the cytoplasm. Its function is as follows. Required for the assembly and/or stability of the 40S ribosomal subunit. Required for the processing of the 20S rRNA-precursor to mature 18S rRNA in a late step of the maturation of 40S ribosomal subunits. This Mycosarcoma maydis (Corn smut fungus) protein is Small ribosomal subunit protein uS2.